Reading from the N-terminus, the 245-residue chain is 3-deoxy-manno-octulosonate cytidylyltransferase (245 aa).

It belongs to the KdsB family.

The protein localises to the cytoplasm. The enzyme catalyses 3-deoxy-alpha-D-manno-oct-2-ulosonate + CTP = CMP-3-deoxy-beta-D-manno-octulosonate + diphosphate. Its pathway is nucleotide-sugar biosynthesis; CMP-3-deoxy-D-manno-octulosonate biosynthesis; CMP-3-deoxy-D-manno-octulosonate from 3-deoxy-D-manno-octulosonate and CTP: step 1/1. The protein operates within bacterial outer membrane biogenesis; lipopolysaccharide biosynthesis. In terms of biological role, activates KDO (a required 8-carbon sugar) for incorporation into bacterial lipopolysaccharide in Gram-negative bacteria. The sequence is that of 3-deoxy-manno-octulosonate cytidylyltransferase from Rhodopseudomonas palustris (strain BisB5).